The primary structure comprises 131 residues: Small ribosomal subunit protein uS12 (131 aa).

Aspartate 89 bears the 3-methylthioaspartic acid mark.

Belongs to the universal ribosomal protein uS12 family. Part of the 30S ribosomal subunit. Contacts proteins S8 and S17. May interact with IF1 in the 30S initiation complex.

Functionally, with S4 and S5 plays an important role in translational accuracy. Its function is as follows. Interacts with and stabilizes bases of the 16S rRNA that are involved in tRNA selection in the A site and with the mRNA backbone. Located at the interface of the 30S and 50S subunits, it traverses the body of the 30S subunit contacting proteins on the other side and probably holding the rRNA structure together. The combined cluster of proteins S8, S12 and S17 appears to hold together the shoulder and platform of the 30S subunit. The chain is Small ribosomal subunit protein uS12 from Karelsulcia muelleri (strain GWSS) (Sulcia muelleri).